The following is a 508-amino-acid chain: Aldehyde dehydrogenase family 7 member B4 (508 aa).

G244 to G249 contacts NAD(+). E266 acts as the Proton acceptor in catalysis. The active-site Nucleophile is C300.

Belongs to the aldehyde dehydrogenase family. As to quaternary structure, homotetramer.

The catalysed reaction is an aldehyde + NAD(+) + H2O = a carboxylate + NADH + 2 H(+). This chain is Aldehyde dehydrogenase family 7 member B4 (ALDH7B4), found in Arabidopsis thaliana (Mouse-ear cress).